The primary structure comprises 593 residues: Mitosis inducer protein kinase cdr1 (593 aa).

Residues 12–258 (WRLGKTLGTG…IPEVFSHPFL (247 aa)) form the Protein kinase domain. ATP contacts are provided by residues 18–26 (LGTGSTSCV) and lysine 41. Aspartate 128 serves as the catalytic Proton acceptor. Phosphoserine is present on serine 550.

This sequence belongs to the protein kinase superfamily. CAMK Ser/Thr protein kinase family. NIM1 subfamily. As to quaternary structure, interacts with msp1.

The catalysed reaction is L-seryl-[protein] + ATP = O-phospho-L-seryl-[protein] + ADP + H(+). It carries out the reaction L-threonyl-[protein] + ATP = O-phospho-L-threonyl-[protein] + ADP + H(+). This protein, a dose-dependent mitotic inducer, appears to function as a negative regulator of mitosis inhibitor wee1 by phosphorylating and inactivating it. The sequence is that of Mitosis inducer protein kinase cdr1 (cdr1) from Schizosaccharomyces pombe (strain 972 / ATCC 24843) (Fission yeast).